The sequence spans 454 residues: Cobyrinate a,c-diamide synthase (454 aa).

Positions 247–442 (KIGIAMDSAF…IHAHWASNPN (196 aa)) constitute a GATase cobBQ-type domain. C329 (nucleophile) is an active-site residue.

The protein belongs to the CobB/CbiA family. Mg(2+) serves as cofactor.

The enzyme catalyses cob(II)yrinate + 2 L-glutamine + 2 ATP + 2 H2O = cob(II)yrinate a,c diamide + 2 L-glutamate + 2 ADP + 2 phosphate + 2 H(+). The protein operates within cofactor biosynthesis; adenosylcobalamin biosynthesis; cob(II)yrinate a,c-diamide from sirohydrochlorin (anaerobic route): step 10/10. Its function is as follows. Catalyzes the ATP-dependent amidation of the two carboxylate groups at positions a and c of cobyrinate, using either L-glutamine or ammonia as the nitrogen source. The polypeptide is Cobyrinate a,c-diamide synthase (Leptospira interrogans serogroup Icterohaemorrhagiae serovar Lai (strain 56601)).